The primary structure comprises 531 residues: GPI alpha-1,2-mannosyltransferase 3 (531 aa).

N84 carries an N-linked (GlcNAc...) asparagine glycan. 3 helical membrane passes run 99–119 (GLRG…LYLL), 124–144 (VWFL…IADV), and 174–196 (YCAT…LYYY). N-linked (GlcNAc...) asparagine glycosylation occurs at N204. 6 helical membrane-spanning segments follow: residues 210–230 (LICV…WIPL), 249–269 (YLPI…IFFG), 303–323 (GVPV…MVTP), 328–348 (ILLV…HKEF), 350–370 (FIYP…SNLK), and 375–395 (AAVG…GLIH). N-linked (GlcNAc...) asparagine glycosylation is found at N414 and N476.

It belongs to the glycosyltransferase 22 family. PIGB subfamily.

It is found in the endoplasmic reticulum membrane. Its pathway is glycolipid biosynthesis; glycosylphosphatidylinositol-anchor biosynthesis. In terms of biological role, alpha-1,2-mannosyltransferase that catalyzes the transfer of the third mannose, via an alpha-1,2 bond, from a dolichol-phosphate-mannose (Dol-P-Man) to an alpha-D-Man-(1-&gt;6)-2-PEtn-alpha-D-Man-(1-&gt;4)-alpha-D-GlcN-(1-&gt;6)-(1-radyl,2-acyl-sn-glycero-3-phospho)-2-acyl-inositol intermediate to generate an alpha-D-Man-(1-&gt;2)-alpha-D-Man-(1-&gt;6)-2-PEtn-alpha-D-Man-(1-&gt;4)-alpha-D-GlcN-(1-&gt;6)-(1-radyl,2-acyl-sn-glycero-3-phospho)-2-acyl-inositol (also termed H6) and participates in the nineth step of the glycosylphosphatidylinositol-anchor biosynthesis. May also add the third mannose to an alpha-D-Man-(1-&gt;6)-alpha-D-Man-(1-&gt;4)-alpha-D-GlcN-(1-&gt;6)-(1-radyl,2-acyl-sn-glycero-3-phospho)-2-acyl-inositol (also termed H3) intermediate generating an alpha-D-Man-(1-&gt;2)-alpha-D-Man-(1-&gt;6)-alpha-D-Man-(1-&gt;4)-alpha-D-GlcN-(1-&gt;6)-(1-radyl,2-acyl-sn-glycero-3-phospho)-2-acyl-inositol (also termed H4). The protein is GPI alpha-1,2-mannosyltransferase 3 of Xenopus laevis (African clawed frog).